A 434-amino-acid chain; its full sequence is Nuclear envelope integral membrane protein 1b (434 aa).

Positions 1–29 (MAGEVEGRGCGFSLGVLVTLLVLPLPSLC) are cleaved as a signal peptide. 5 helical membrane passes run 151–171 (PRLF…DTLS), 175–195 (LFFY…ILVF), 206–226 (PFFA…QLVF), 239–259 (YLIV…YIYG), and 280–300 (LLMY…VIAF). The tract at residues 176–287 (FFYSTGITVG…GLLLMYVSVQ (112 aa)) is a; required for its colocalization with lamins at the nuclear envelope. The short motif at 317–325 (RKIKLKRAK) is the Nuclear localization signal element. Residues 326 to 395 (PGPPRLLTEE…LTPNEVSVHE (70 aa)) are b; interaction with ran. The tract at residues 326–434 (PGPPRLLTEE…PLYPIPRSVF (109 aa)) is interaction with banf1-a and banf1-b. The BAF-binding site (BBS); essential for interaction with banf1-a, banf1-b and ran stretch occupies residues 368 to 375 (SRIQSPKR).

It belongs to the NEMP family. As to quaternary structure, interacts with banf1-a and banf1-b. Interacts with ran-gtp. Post-translationally, phosphorylated.

Its subcellular location is the nucleus inner membrane. It localises to the nucleus envelope. In concert with ran, required for proper eye development. May be involved in the expression of early eye marker genes. Contributes to nuclear envelope stiffness in germ cells. Required for fertility. Essential for normal erythropoiesis. Required for efficient nuclear envelope opening and enucleation during the late stages of erythroblast maturation. This chain is Nuclear envelope integral membrane protein 1b (nemp1b), found in Xenopus laevis (African clawed frog).